Reading from the N-terminus, the 321-residue chain is Lipoyl synthase (321 aa).

[4Fe-4S] cluster contacts are provided by cysteine 68, cysteine 73, cysteine 79, cysteine 94, cysteine 98, cysteine 101, and serine 308. One can recognise a Radical SAM core domain in the interval 80–297; it reads FNHGTATFMI…KVLADELGFT (218 aa).

The protein belongs to the radical SAM superfamily. Lipoyl synthase family. [4Fe-4S] cluster serves as cofactor.

It is found in the cytoplasm. The catalysed reaction is [[Fe-S] cluster scaffold protein carrying a second [4Fe-4S](2+) cluster] + N(6)-octanoyl-L-lysyl-[protein] + 2 oxidized [2Fe-2S]-[ferredoxin] + 2 S-adenosyl-L-methionine + 4 H(+) = [[Fe-S] cluster scaffold protein] + N(6)-[(R)-dihydrolipoyl]-L-lysyl-[protein] + 4 Fe(3+) + 2 hydrogen sulfide + 2 5'-deoxyadenosine + 2 L-methionine + 2 reduced [2Fe-2S]-[ferredoxin]. The protein operates within protein modification; protein lipoylation via endogenous pathway; protein N(6)-(lipoyl)lysine from octanoyl-[acyl-carrier-protein]: step 2/2. In terms of biological role, catalyzes the radical-mediated insertion of two sulfur atoms into the C-6 and C-8 positions of the octanoyl moiety bound to the lipoyl domains of lipoate-dependent enzymes, thereby converting the octanoylated domains into lipoylated derivatives. The protein is Lipoyl synthase of Shewanella sp. (strain ANA-3).